The sequence spans 618 residues: Probable Xaa-Pro aminopeptidase P (618 aa).

The Mn(2+) site is built by Asp-414, Asp-425, Glu-523, and Glu-537.

It belongs to the peptidase M24B family. The cofactor is Mn(2+).

It catalyses the reaction Release of any N-terminal amino acid, including proline, that is linked to proline, even from a dipeptide or tripeptide.. Its function is as follows. Catalyzes the removal of a penultimate prolyl residue from the N-termini of peptides. This chain is Probable Xaa-Pro aminopeptidase P (AMPP), found in Metarhizium robertsii (strain ARSEF 23 / ATCC MYA-3075) (Metarhizium anisopliae (strain ARSEF 23)).